The primary structure comprises 429 residues: Xyloglucan O-acetyltransferase 1 (429 aa).

The Cytoplasmic segment spans residues 1-20 (MGSPFKDHHHHHHPFSLAKK). A helical; Signal-anchor for type II membrane protein membrane pass occupies residues 21–41 (LIPWTFYAMIPLVLFRLYFYP). The Lumenal segment spans residues 42–429 (YPLHNITTPI…KWDYESRREE (388 aa)). 2 N-linked (GlcNAc...) asparagine glycosylation sites follow: asparagine 46 and asparagine 89. 4 disulfide bridges follow: cysteine 72-cysteine 122, cysteine 93-cysteine 158, cysteine 102-cysteine 402, and cysteine 317-cysteine 398. The GDS motif motif lies at 145 to 147 (GDS). Serine 147 functions as the Nucleophile in the catalytic mechanism. N-linked (GlcNAc...) asparagine glycosylation is found at asparagine 189, asparagine 263, and asparagine 351. Aspartate 397 (proton donor) is an active-site residue. The DXXH motif motif lies at 397–400 (DCVH). Histidine 400 serves as the catalytic Proton acceptor.

The protein belongs to the PC-esterase family. TBL subfamily.

The protein localises to the golgi apparatus membrane. In terms of biological role, xyloglucan acetyltransferase that catalyzes the acetylation of fucosylated Gal residues on xyloglucan side chains. Predominantly catalyze 6-O-monoacetylation of Gal residues in the Fuc-Gal-Xyl trisaccharide side chains of xyloglucan oligomers. This is Xyloglucan O-acetyltransferase 1 from Populus trichocarpa (Western balsam poplar).